Consider the following 568-residue polypeptide: 2-succinyl-5-enolpyruvyl-6-hydroxy-3-cyclohexene-1-carboxylate synthase (568 aa).

The protein belongs to the TPP enzyme family. MenD subfamily. Homodimer. Mg(2+) serves as cofactor. It depends on Mn(2+) as a cofactor. Requires thiamine diphosphate as cofactor.

The catalysed reaction is isochorismate + 2-oxoglutarate + H(+) = 5-enolpyruvoyl-6-hydroxy-2-succinyl-cyclohex-3-ene-1-carboxylate + CO2. It functions in the pathway quinol/quinone metabolism; 1,4-dihydroxy-2-naphthoate biosynthesis; 1,4-dihydroxy-2-naphthoate from chorismate: step 2/7. The protein operates within quinol/quinone metabolism; menaquinone biosynthesis. Functionally, catalyzes the thiamine diphosphate-dependent decarboxylation of 2-oxoglutarate and the subsequent addition of the resulting succinic semialdehyde-thiamine pyrophosphate anion to isochorismate to yield 2-succinyl-5-enolpyruvyl-6-hydroxy-3-cyclohexene-1-carboxylate (SEPHCHC). This chain is 2-succinyl-5-enolpyruvyl-6-hydroxy-3-cyclohexene-1-carboxylate synthase, found in Actinobacillus pleuropneumoniae serotype 7 (strain AP76).